A 344-amino-acid polypeptide reads, in one-letter code: Ion-translocating oxidoreductase complex subunit D (344 aa).

4 helical membrane passes run 23-43 (LVLGACVPGLLTLTWLYGPGT), 44-64 (LLNLAWASLVALACEAAMLAL), 77-99 (SALVTALLLAVALPPYAPWWLTL), and 120-140 (PFNPAMLGYVVALVSFPLEMT). The residue at position 172 (Thr172) is an FMN phosphoryl threonine. A run of 5 helical transmembrane segments spans residues 198-218 (LGSAGSEWVNLAFLLGGLFLL), 222-242 (LFTWHAPLGMLAGLFAMSLLF), 252-272 (GSPLFHLFSGATMLGAFFIVT), 285-305 (LVFGLGVGVLTYVIRAWGGYP), and 306-326 (DGMAFAVLLMNLAAPTIDYYT).

Belongs to the NqrB/RnfD family. The complex is composed of six subunits: RnfA, RnfB, RnfC, RnfD, RnfE and RnfG. It depends on FMN as a cofactor.

It is found in the cell inner membrane. Part of a membrane-bound complex that couples electron transfer with translocation of ions across the membrane. In Pseudomonas aeruginosa (strain LESB58), this protein is Ion-translocating oxidoreductase complex subunit D.